The following is a 52-amino-acid chain: Insulin (52 aa).

3 disulfide bridges follow: C9–C38, C21–C51, and C37–C42.

This sequence belongs to the insulin family. As to quaternary structure, heterodimer of a B chain and an A chain linked by two disulfide bonds.

The protein resides in the secreted. Its function is as follows. Insulin decreases blood glucose concentration. It increases cell permeability to monosaccharides, amino acids and fatty acids. It accelerates glycolysis, the pentose phosphate cycle, and glycogen synthesis in liver. The sequence is that of Insulin (ins) from Piaractus mesopotamicus (Small-scaled pacu).